The chain runs to 788 residues: Spastin (788 aa).

The segment at 1-105 (MVRTKNQSSS…PRSAGGPSSV (105 aa)) is disordered. The Cytoplasmic segment spans residues 1-116 (MVRTKNQSSS…KQNLYVVSFP (116 aa)). A required for localization to punctate cytoplasmic foci region spans residues 1 to 227 (MVRTKNQSSS…NRSGSGYSPG (227 aa)). Composition is skewed to low complexity over residues 8–48 (SSSS…SSHR) and 57–75 (ATNV…SSPD). The helical intramembrane region spans 117-137 (IIFLFNVLRSLIYQLFCIFRY). Over 138–788 (LYGASTKVIY…WSSDYGDITI (651 aa)) the chain is Cytoplasmic. The tract at residues 227–788 (GPGDPLLAKQ…WSSDYGDITI (562 aa)) is sufficient for interaction with microtubules and microtubule severing. One can recognise an MIT domain in the interval 240 to 315 (HRRAFEYISK…SMARDRLHFL (76 aa)). The segment covering 331–353 (EKQKANESREQQQKPQKAREAAD) has biased composition (basic and acidic residues). The disordered stretch occupies residues 331–484 (EKQKANESRE…SGSGSGASTP (154 aa)). Residues 387–400 (ATATTPTSSSSLAS) are compositionally biased toward low complexity. Polar residues-rich tracts occupy residues 419 to 433 (NKSQ…SKTS) and 453 to 469 (QFSS…RTPI). Residues 471–485 (NNGASGSGSGASTPV) form a required for interaction with microtubules region. 553–560 (GPPGNGKT) provides a ligand contact to ATP.

This sequence belongs to the AAA ATPase family. Spastin subfamily. In terms of assembly, homohexamer. The homohexamer is stabilized by ATP-binding. The homohexamer may adopt a ring conformation through which microtubules pass prior to being severed. Interacts with microtubules. Interacts with atl; may be involved in microtubule dynamics.

The protein resides in the membrane. It is found in the cytoplasm. It localises to the cytoskeleton. Its subcellular location is the microtubule organizing center. The protein localises to the centrosome. The protein resides in the chromosome. It is found in the lipid droplet. It carries out the reaction n ATP + n H2O + a microtubule = n ADP + n phosphate + (n+1) alpha/beta tubulin heterodimers.. In terms of biological role, ATP-dependent microtubule severing protein. Stimulates microtubule minus-end depolymerization and poleward microtubule flux in the mitotic spindle. Regulates microtubule stability in the neuromuscular junction synapse. Involved in lipid metabolism by regulating the size and distribution of lipid droplets. Involved in axon regeneration by regulating microtubule severing. This chain is Spastin, found in Drosophila persimilis (Fruit fly).